The sequence spans 449 residues: Glucose-6-phosphate isomerase (449 aa).

Glu291 (proton donor) is an active-site residue. Catalysis depends on residues His312 and Lys426.

This sequence belongs to the GPI family.

The protein localises to the cytoplasm. The catalysed reaction is alpha-D-glucose 6-phosphate = beta-D-fructose 6-phosphate. It functions in the pathway carbohydrate biosynthesis; gluconeogenesis. Its pathway is carbohydrate degradation; glycolysis; D-glyceraldehyde 3-phosphate and glycerone phosphate from D-glucose: step 2/4. In terms of biological role, catalyzes the reversible isomerization of glucose-6-phosphate to fructose-6-phosphate. The chain is Glucose-6-phosphate isomerase from Streptococcus pyogenes serotype M28 (strain MGAS6180).